Reading from the N-terminus, the 155-residue chain is Fibroblast growth factor 1 (155 aa).

The residue at position 2 (A2) is an N-acetylalanine. Residues 2 to 15 constitute a propeptide that is removed on maturation; it reads AEGEITTFAALTER. N33 lines the heparin pocket. Positions 127 to 143 are heparin-binding; it reads KKNGSCKRGPRTHYGQK.

It belongs to the heparin-binding growth factors family. In terms of assembly, monomer. Homodimer. Interacts with FGFR1, FGFR2, FGFR3 and FGFR4. Affinity between fibroblast growth factors (FGFs) and their receptors is increased by heparan sulfate glycosaminoglycans that function as coreceptors. Found in a complex with FGFBP1, FGF1 and FGF2. Interacts with FGFBP1. Part of a Cu(2+)-dependent multiprotein aggregate containing FGF1, S100A13 and SYT1. Interacts with SYT1. Interacts with S100A13. Interacts with LRRC59. Interacts with CSNKA, CSNKB and FIBP. While binding with LRRC59, CSNKA and FIBP seem mutually exclusive, CSNKB and FIBP may cooperatively interact with FGF1. Forms a ternary complex with FGFR1 and ITGAV:ITGB3 and induces the recruitment of PTPN11 to the complex. In the nucleus, phosphorylated by PKC/PRKCD.

The protein localises to the secreted. The protein resides in the cytoplasm. It localises to the cell cortex. Its subcellular location is the cytosol. It is found in the nucleus. In terms of biological role, plays an important role in the regulation of cell survival, cell division, angiogenesis, cell differentiation and cell migration. Functions as a potent mitogen in vitro. Acts as a ligand for FGFR1 and integrins. Binds to FGFR1 in the presence of heparin leading to FGFR1 dimerization and activation via sequential autophosphorylation on tyrosine residues which act as docking sites for interacting proteins, leading to the activation of several signaling cascades. Binds to integrin ITGAV:ITGB3. Its binding to integrin, subsequent ternary complex formation with integrin and FGFR1, and the recruitment of PTPN11 to the complex are essential for FGF1 signaling. Induces the phosphorylation and activation of FGFR1, FRS2, MAPK3/ERK1, MAPK1/ERK2 and AKT1. Can induce angiogenesis. The protein is Fibroblast growth factor 1 (Fgf1) of Mus musculus (Mouse).